Consider the following 1129-residue polypeptide: Eukaryotic translation initiation factor 3 subunit A (1129 aa).

The PCI domain maps to 319-502; that stretch reads LQRMAAHVLL…NSIYFGTDLT (184 aa). 2 disordered regions span residues 590–633 and 836–1129; these read NNAR…NEIQ and AAEA…VKRR. Basic and acidic residues-rich tracts occupy residues 836–903, 923–964, 971–985, 994–1044, and 1053–1076; these read AAEA…RSER, DRND…KDTD, WRVRREPVEPQRERG, GRDD…DQPQ, and DSPRQNDRDNRDNRRPAGDRRDIR. Over residues 1080 to 1091 the composition is skewed to gly residues; sequence PKEGGGGGGGGN. Positions 1098-1119 are enriched in basic and acidic residues; sequence PRDEKPPVKRDQPQDKENKAGD.

The protein belongs to the eIF-3 subunit A family. As to quaternary structure, component of the eukaryotic translation initiation factor 3 (eIF-3) complex. The eIF-3 complex interacts with pix.

It is found in the cytoplasm. Its function is as follows. RNA-binding component of the eukaryotic translation initiation factor 3 (eIF-3) complex, which is involved in protein synthesis of a specialized repertoire of mRNAs and, together with other initiation factors, stimulates binding of mRNA and methionyl-tRNAi to the 40S ribosome. The eIF-3 complex specifically targets and initiates translation of a subset of mRNAs involved in cell proliferation. The protein is Eukaryotic translation initiation factor 3 subunit A of Drosophila mojavensis (Fruit fly).